Reading from the N-terminus, the 357-residue chain is Dual-specificity RNA methyltransferase RlmN (357 aa).

Catalysis depends on glutamate 89, which acts as the Proton acceptor. The region spanning 109–340 is the Radical SAM core domain; that stretch reads EGEKYTVCVS…CTIRESKALD (232 aa). Cysteine 116 and cysteine 345 are disulfide-bonded. Residues cysteine 123, cysteine 127, and cysteine 130 each contribute to the [4Fe-4S] cluster site. S-adenosyl-L-methionine-binding positions include 173–174, serine 203, 226–228, and asparagine 302; these read GE and SLH. Cysteine 345 acts as the S-methylcysteine intermediate in catalysis.

Belongs to the radical SAM superfamily. RlmN family. Requires [4Fe-4S] cluster as cofactor.

Its subcellular location is the cytoplasm. It catalyses the reaction adenosine(2503) in 23S rRNA + 2 reduced [2Fe-2S]-[ferredoxin] + 2 S-adenosyl-L-methionine = 2-methyladenosine(2503) in 23S rRNA + 5'-deoxyadenosine + L-methionine + 2 oxidized [2Fe-2S]-[ferredoxin] + S-adenosyl-L-homocysteine. The enzyme catalyses adenosine(37) in tRNA + 2 reduced [2Fe-2S]-[ferredoxin] + 2 S-adenosyl-L-methionine = 2-methyladenosine(37) in tRNA + 5'-deoxyadenosine + L-methionine + 2 oxidized [2Fe-2S]-[ferredoxin] + S-adenosyl-L-homocysteine. In terms of biological role, specifically methylates position 2 of adenine 2503 in 23S rRNA and position 2 of adenine 37 in tRNAs. m2A2503 modification seems to play a crucial role in the proofreading step occurring at the peptidyl transferase center and thus would serve to optimize ribosomal fidelity. This Helicobacter pylori (strain J99 / ATCC 700824) (Campylobacter pylori J99) protein is Dual-specificity RNA methyltransferase RlmN.